A 508-amino-acid polypeptide reads, in one-letter code: Photosystem II CP47 reaction center protein (508 aa).

Transmembrane regions (helical) follow at residues 21-36 (SVHI…WAGS), 101-115 (IVFS…IWHW), 140-156 (GIHL…FGAF), 203-218 (IAAG…FHLS), 237-252 (VLSS…AFVV), and 457-472 (SFAL…HGAR).

This sequence belongs to the PsbB/PsbC family. PsbB subfamily. PSII is composed of 1 copy each of membrane proteins PsbA, PsbB, PsbC, PsbD, PsbE, PsbF, PsbH, PsbI, PsbJ, PsbK, PsbL, PsbM, PsbT, PsbX, PsbY, PsbZ, Psb30/Ycf12, at least 3 peripheral proteins of the oxygen-evolving complex and a large number of cofactors. It forms dimeric complexes. Binds multiple chlorophylls. PSII binds additional chlorophylls, carotenoids and specific lipids. is required as a cofactor.

It localises to the plastid. The protein localises to the chloroplast thylakoid membrane. One of the components of the core complex of photosystem II (PSII). It binds chlorophyll and helps catalyze the primary light-induced photochemical processes of PSII. PSII is a light-driven water:plastoquinone oxidoreductase, using light energy to abstract electrons from H(2)O, generating O(2) and a proton gradient subsequently used for ATP formation. The chain is Photosystem II CP47 reaction center protein from Lactuca sativa (Garden lettuce).